A 121-amino-acid polypeptide reads, in one-letter code: Large ribosomal subunit protein uL18 (121 aa).

The protein belongs to the universal ribosomal protein uL18 family. In terms of assembly, part of the 50S ribosomal subunit; part of the 5S rRNA/L5/L18/L25 subcomplex. Contacts the 5S and 23S rRNAs.

Its function is as follows. This is one of the proteins that bind and probably mediate the attachment of the 5S RNA into the large ribosomal subunit, where it forms part of the central protuberance. The protein is Large ribosomal subunit protein uL18 of Delftia acidovorans (strain DSM 14801 / SPH-1).